We begin with the raw amino-acid sequence, 395 residues long: Transmembrane protein 79 (395 aa).

A disordered region spans residues Met1–Glu115. Residues Met1 to Ser204 are Cytoplasmic-facing. The helical transmembrane segment at Val205–Phe225 threads the bilayer. Residues Asp226 to Gly244 lie on the Extracellular side of the membrane. Residues Val245–Phe265 traverse the membrane as a helical segment. Over Ala266–Gln290 the chain is Cytoplasmic. The helical transmembrane segment at Leu291–Leu311 threads the bilayer. Residues Lys312–Leu313 lie on the Extracellular side of the membrane. A helical transmembrane segment spans residues Leu314 to Val334. At Gly335–Tyr343 the chain is on the cytoplasmic side. A helical membrane pass occupies residues Gly344–Val364. The Extracellular segment spans residues Glu365–Gly395.

The protein localises to the lysosome. The protein resides in the golgi apparatus. It is found in the trans-Golgi network. Its subcellular location is the membrane. Functionally, contributes to the epidermal integrity and skin barrier function. Plays a role in the lamellar granule (LG) secretory system and in the stratum corneum (SC) epithelial cell formation. The sequence is that of Transmembrane protein 79 (TMEM79) from Bos taurus (Bovine).